Here is a 217-residue protein sequence, read N- to C-terminus: Large ribosomal subunit protein uL1 (217 aa).

Position 122 is an N6,N6-dimethyllysine; alternate (lysine 122). Lysine 122 carries the N6-methyllysine; alternate modification.

This sequence belongs to the universal ribosomal protein uL1 family.

In Dictyostelium discoideum (Social amoeba), this protein is Large ribosomal subunit protein uL1 (rpl10a).